The sequence spans 176 residues: Probable chemoreceptor glutamine deamidase CheD (176 aa).

It belongs to the CheD family.

It carries out the reaction L-glutaminyl-[protein] + H2O = L-glutamyl-[protein] + NH4(+). Functionally, probably deamidates glutamine residues to glutamate on methyl-accepting chemotaxis receptors (MCPs), playing an important role in chemotaxis. The chain is Probable chemoreceptor glutamine deamidase CheD from Rhodospirillum rubrum (strain ATCC 11170 / ATH 1.1.1 / DSM 467 / LMG 4362 / NCIMB 8255 / S1).